A 265-amino-acid chain; its full sequence is Ribosomal RNA small subunit methyltransferase A (265 aa).

Residues His-13, Leu-15, Gly-40, Glu-61, Asp-85, and Asn-103 each coordinate S-adenosyl-L-methionine.

Belongs to the class I-like SAM-binding methyltransferase superfamily. rRNA adenine N(6)-methyltransferase family. RsmA subfamily.

It localises to the cytoplasm. The enzyme catalyses adenosine(1518)/adenosine(1519) in 16S rRNA + 4 S-adenosyl-L-methionine = N(6)-dimethyladenosine(1518)/N(6)-dimethyladenosine(1519) in 16S rRNA + 4 S-adenosyl-L-homocysteine + 4 H(+). Specifically dimethylates two adjacent adenosines (A1518 and A1519) in the loop of a conserved hairpin near the 3'-end of 16S rRNA in the 30S particle. May play a critical role in biogenesis of 30S subunits. This Bordetella pertussis (strain Tohama I / ATCC BAA-589 / NCTC 13251) protein is Ribosomal RNA small subunit methyltransferase A.